The following is a 195-amino-acid chain: uncharacterized protein (195 aa).

The first 16 residues, Met1 to Gly16, serve as a signal peptide directing secretion.

This is an uncharacterized protein from Acanthamoeba polyphaga mimivirus (APMV).